The primary structure comprises 346 residues: Methylthioribose-1-phosphate isomerase (346 aa).

Residues 54–56 (RGA), arginine 91, and glutamine 192 contribute to the substrate site. Aspartate 233 serves as the catalytic Proton donor. 243 to 244 (NK) is a binding site for substrate.

This sequence belongs to the eIF-2B alpha/beta/delta subunits family. MtnA subfamily.

The catalysed reaction is 5-(methylsulfanyl)-alpha-D-ribose 1-phosphate = 5-(methylsulfanyl)-D-ribulose 1-phosphate. The protein operates within amino-acid biosynthesis; L-methionine biosynthesis via salvage pathway; L-methionine from S-methyl-5-thio-alpha-D-ribose 1-phosphate: step 1/6. In terms of biological role, catalyzes the interconversion of methylthioribose-1-phosphate (MTR-1-P) into methylthioribulose-1-phosphate (MTRu-1-P). This chain is Methylthioribose-1-phosphate isomerase, found in Yersinia enterocolitica serotype O:8 / biotype 1B (strain NCTC 13174 / 8081).